Here is a 179-residue protein sequence, read N- to C-terminus: ATP synthase subunit delta (179 aa).

It belongs to the ATPase delta chain family. F-type ATPases have 2 components, F(1) - the catalytic core - and F(0) - the membrane proton channel. F(1) has five subunits: alpha(3), beta(3), gamma(1), delta(1), epsilon(1). F(0) has three main subunits: a(1), b(2) and c(10-14). The alpha and beta chains form an alternating ring which encloses part of the gamma chain. F(1) is attached to F(0) by a central stalk formed by the gamma and epsilon chains, while a peripheral stalk is formed by the delta and b chains.

The protein localises to the cell inner membrane. F(1)F(0) ATP synthase produces ATP from ADP in the presence of a proton or sodium gradient. F-type ATPases consist of two structural domains, F(1) containing the extramembraneous catalytic core and F(0) containing the membrane proton channel, linked together by a central stalk and a peripheral stalk. During catalysis, ATP synthesis in the catalytic domain of F(1) is coupled via a rotary mechanism of the central stalk subunits to proton translocation. In terms of biological role, this protein is part of the stalk that links CF(0) to CF(1). It either transmits conformational changes from CF(0) to CF(1) or is implicated in proton conduction. In Paraburkholderia phymatum (strain DSM 17167 / CIP 108236 / LMG 21445 / STM815) (Burkholderia phymatum), this protein is ATP synthase subunit delta.